A 495-amino-acid chain; its full sequence is Probable leucine aminopeptidase 2 (495 aa).

The N-terminal stretch at 1 to 21 is a signal peptide; sequence MKSQLLSLAVAVTTISQGVVG. The 87-residue stretch at 130 to 216 folds into the PA domain; sequence MAELVVAKNN…SQEDGKNLAT (87 aa). Residues Asn-142 and Asn-235 are each glycosylated (N-linked (GlcNAc...) asparagine). Zn(2+)-binding residues include His-259 and Asp-271. Residue Asn-272 is glycosylated (N-linked (GlcNAc...) asparagine). The active-site Proton acceptor is the Glu-303. Glu-304 and Asp-332 together coordinate Zn(2+). N-linked (GlcNAc...) asparagine glycosylation occurs at Asn-352. His-430 lines the Zn(2+) pocket.

Belongs to the peptidase M28 family. M28A subfamily. In terms of assembly, monomer. Zn(2+) is required as a cofactor.

It is found in the secreted. Its function is as follows. Extracellular aminopeptidase that releases a wide variety of amino acids from natural peptides and contributes to pathogenicity. In Arthroderma benhamiae (strain ATCC MYA-4681 / CBS 112371) (Trichophyton mentagrophytes), this protein is Probable leucine aminopeptidase 2 (LAP2).